The following is a 104-amino-acid chain: Large ribosomal subunit protein uL24 (104 aa).

Belongs to the universal ribosomal protein uL24 family. In terms of assembly, part of the 50S ribosomal subunit.

Its function is as follows. One of two assembly initiator proteins, it binds directly to the 5'-end of the 23S rRNA, where it nucleates assembly of the 50S subunit. In terms of biological role, one of the proteins that surrounds the polypeptide exit tunnel on the outside of the subunit. In Clostridium botulinum (strain Eklund 17B / Type B), this protein is Large ribosomal subunit protein uL24.